The chain runs to 346 residues: Sensor histidine kinase GraS (346 aa).

2 helical membrane passes run 15–35 and 43–63; these read MNWIFWILFLNFLMLGISLID and LFYIVSLNLSLTMIFLLLTYF. Residues 126–332 enclose the Histidine kinase domain; sequence EFVHDIKTPV…TVRLIFPLQN (207 aa).

As to quaternary structure, interacts with GraX.

Its subcellular location is the cell membrane. It carries out the reaction ATP + protein L-histidine = ADP + protein N-phospho-L-histidine.. Its function is as follows. Member of the two-component regulatory system GraR/GraS involved in resistance against cationic antimicrobial peptides (CAMPs). Functions as a sensor protein kinase which phosphorylates GraR through the auxiliary protein GraX. In turn, GraR up-regulates many genes such as adhesins, exoproteins, transporters, toxins, and proteins involved in cell wall synthesis. Down-regulates the expression of many genes involved in RNA and amino acid synthesis or glycolysis. In Staphylococcus aureus (strain COL), this protein is Sensor histidine kinase GraS (graS).